Reading from the N-terminus, the 756-residue chain is Xylosyl- and glucuronyltransferase LARGE1 (756 aa).

Over 1 to 10 the chain is Cytoplasmic; the sequence is MLGICRGRRK. The helical; Signal-anchor for type II membrane protein transmembrane segment at 11–31 threads the bilayer; the sequence is FLAASLSLLCIPAITWIYLFS. Residues 32-756 lie on the Lumenal side of the membrane; sequence GSFEDGKPVS…LKYLTAENNS (725 aa). 2 disordered regions span residues 43–69 and 81–109; these read SPLESQAHSPRYTASSQRERESLEVRM and RQLSLAQGRAPSHRRGNHSKTYSMEEGTG. Positions 44–58 are enriched in polar residues; the sequence is PLESQAHSPRYTASS. The stretch at 53–95 forms a coiled coil; that stretch reads RYTASSQRERESLEVRMREVEEENRALRRQLSLAQGRAPSHRR. The span at 59–69 shows a compositional bias: basic and acidic residues; it reads QRERESLEVRM. N-linked (GlcNAc...) asparagine glycans are attached at residues N97, N122, and N148. The tract at residues 138-413 is xylosyltransferase activity; sequence IHVAIVCAGY…FLEYDGNLLR (276 aa). Residues D242 and D244 each coordinate Mn(2+). Residue N272 is glycosylated (N-linked (GlcNAc...) asparagine). A glucuronyltransferase activity region spans residues 414–756; the sequence is RELFGCPSEA…LKYLTAENNS (343 aa). Mn(2+)-binding residues include D563 and D565.

The protein in the C-terminal section; belongs to the glycosyltransferase 49 family. This sequence in the N-terminal section; belongs to the glycosyltransferase 8 family. In terms of assembly, interacts with DAG1 (via the N-terminal domain of alpha-DAG1); the interaction increases binding of DAG1 to laminin. Interacts with B4GAT1. Requires Mn(2+) as cofactor. In terms of tissue distribution, ubiquitous. Highest expression in heart, brain and skeletal muscle.

The protein resides in the golgi apparatus membrane. It carries out the reaction 3-O-[beta-D-GlcA-(1-&gt;3)-beta-D-Xyl-(1-&gt;4)-Rib-ol-P-Rib-ol-P-3-beta-D-GalNAc-(1-&gt;3)-beta-D-GlcNAc-(1-&gt;4)-(O-6-P-alpha-D-Man)]-Thr-[protein] + UDP-alpha-D-xylose = 3-O-[alpha-D-Xyl-(1-&gt;3)-beta-D-GlcA-(1-&gt;4)-beta-D-Xyl-(1-&gt;4)-Rib-ol-P-Rib-ol-P-3-beta-D-GalNAc-(1-&gt;3)-beta-D-GlcNAc-(1-&gt;4)-(O-6-P-alpha-D-Man)]-Thr-[protein] + UDP + H(+). The catalysed reaction is 3-O-{(1-&gt;[3)-alpha-D-Xyl-(1-&gt;3)-beta-D-GlcA-(1-&gt;](n)-4)-beta-D-Xyl-(1-&gt;4)-Rib-ol-P-Rib-ol-P-3-beta-D-GalNAc-(1-&gt;3)-beta-D-GlcNAc-(1-&gt;4)-O-6-P-alpha-D-Man}-L-Thr-[protein] + UDP-alpha-D-glucuronate = 3-O-{beta-D-GlcA-(1-&gt;[3)-alpha-D-Xyl-(1-&gt;3)-beta-D-GlcA-(1-&gt;](n)-4)-beta-D-Xyl-(1-&gt;4)-Rib-ol-P-Rib-ol-P-3-beta-D-GalNAc-(1-&gt;3)-beta-D-GlcNAc-(1-&gt;4)-O-6-P-alpha-D-Man}-L-Thr-[protein] + UDP + H(+). The enzyme catalyses 3-O-{beta-D-GlcA-(1-&gt;[3)-alpha-D-Xyl-(1-&gt;3)-beta-D-GlcA-(1-&gt;](n)-4)-beta-D-Xyl-(1-&gt;4)-Rib-ol-P-Rib-ol-P-3-beta-D-GalNAc-(1-&gt;3)-beta-D-GlcNAc-(1-&gt;4)-O-6-P-alpha-D-Man}-L-Thr-[protein] + UDP-alpha-D-xylose = 3-O-{(1-&gt;[3)-alpha-D-Xyl-(1-&gt;3)-beta-D-GlcA-(1-&gt;](n+1)-4)-beta-D-Xyl-(1-&gt;4)-Rib-ol-P-Rib-ol-P-3-beta-D-GalNAc-(1-&gt;3)-beta-D-GlcNAc-(1-&gt;4)-O-6-P-alpha-D-Man}-L-Thr-[protein] + UDP + H(+). It participates in protein modification; protein glycosylation. Functionally, bifunctional glycosyltransferase with both alpha-1,3-xylosyltransferase and beta-1,3-glucuronyltransferase activities involved in the maturation of alpha-dystroglycan (DAG1) by glycosylation leading to DAG1 binding to laminin G-like domain-containing extracellular proteins with high affinity. Elongates the glucuronyl-beta-1,4-xylose-beta disaccharide primer structure initiated by B4GAT1 by adding repeating units [-3-Xylose-alpha-1,3-GlcA-beta-1-] to produce a heteropolysaccharide. Requires the phosphorylation of core M3 (O-mannosyl trisaccharide) by POMK to elongate the glucuronyl-beta-1,4-xylose-beta disaccharide primer. Plays a key role in skeletal muscle function and regeneration. In Homo sapiens (Human), this protein is Xylosyl- and glucuronyltransferase LARGE1.